The sequence spans 314 residues: Dihydroorotate dehydrogenase (fumarate) (314 aa).

Substrate contacts are provided by residues lysine 46, 70-74 (NSMGL), and asparagine 130. Position 46-47 (46-47 (KS)) interacts with FMN. Residue asparagine 130 coordinates FMN. Active-site nucleophile residues include serine 132 and cysteine 133. FMN-binding residues include lysine 167 and isoleucine 195. 196–197 (NS) lines the substrate pocket. FMN contacts are provided by residues glycine 224, 252-253 (GG), and 274-275 (GT).

Belongs to the dihydroorotate dehydrogenase family. Type 1 subfamily. Homodimer. FMN serves as cofactor.

It is found in the cytoplasm. It catalyses the reaction (S)-dihydroorotate + fumarate = orotate + succinate. It participates in pyrimidine metabolism; UMP biosynthesis via de novo pathway. In terms of biological role, catalyzes the conversion of dihydroorotate to orotate with fumarate as the electron acceptor. The protein is Dihydroorotate dehydrogenase (fumarate) (URA1) of Saccharomyces mikatae (Yeast).